A 374-amino-acid polypeptide reads, in one-letter code: MANQVIRCKAAVAWEAGKPLSIEEIEVAPPKAHEVRIKILATAVCHTDAYTLSGADPEGCFPVILGHEGAGIVESVGEGVTKLKAGDTVIPLYIPQCGECKFCLNPKTNLCQKIRVTQGKGLMPDGTSRFTCKGKSVFHFMGTSTFSEYTVVADISVAKIDPSAPLDKVCLLGCGISTGYGAAVNTAKVEPGSTCAVFGLGGVGLAVIMGCKVAGASRIIGIDINKDKFAKAKEFGASECISPQDFSKSIQEVLVEMTDGGVDYSFECIGNVKVMRSALEAAHKGWGVSVVVGVAASGEEISTRPFQLVTGRTWKGTAFGGWKSVESVPKLVSEYMSKKIKVDEFVTGNLSFDQINQAFDLMHSGDSIRTVLKM.

Ala2 carries the post-translational modification N-acetylalanine. Zn(2+)-binding residues include Cys45, His67, Cys97, Cys100, Cys103, Cys111, and Cys174. Residue Lys233 is modified to N6-succinyllysine. A Phosphoserine modification is found at Ser247. Position 315 is an N6-succinyllysine (Lys315). Ser324 and Ser351 each carry phosphoserine.

This sequence belongs to the zinc-containing alcohol dehydrogenase family. Class-III subfamily. Homodimer. Zn(2+) is required as a cofactor. In terms of tissue distribution, ubiquitous.

The protein resides in the cytoplasm. It catalyses the reaction a primary alcohol + NAD(+) = an aldehyde + NADH + H(+). It carries out the reaction a secondary alcohol + NAD(+) = a ketone + NADH + H(+). The enzyme catalyses S-(hydroxymethyl)glutathione + NADP(+) = S-formylglutathione + NADPH + H(+). The catalysed reaction is S-(hydroxymethyl)glutathione + NAD(+) = S-formylglutathione + NADH + H(+). It catalyses the reaction 20-oxo-(5Z,8Z,11Z,14Z)-eicosatetraenoate + NAD(+) + H2O = (5Z,8Z,11Z,14Z)-eicosatetraenedioate + NADH + 2 H(+). It carries out the reaction 20-hydroxy-(5Z,8Z,11Z,14Z)-eicosatetraenoate + NAD(+) = 20-oxo-(5Z,8Z,11Z,14Z)-eicosatetraenoate + NADH + H(+). The enzyme catalyses S-nitrosoglutathione + NADH + H(+) = S-(hydroxysulfenamide)glutathione + NAD(+). Functionally, catalyzes the oxidation of long-chain primary alcohols and the oxidation of S-(hydroxymethyl) glutathione. Also oxidizes long chain omega-hydroxy fatty acids, such as 20-HETE, producing both the intermediate aldehyde, 20-oxoarachidonate and the end product, a dicarboxylic acid, (5Z,8Z,11Z,14Z)-eicosatetraenedioate. Class-III ADH is remarkably ineffective in oxidizing ethanol. Required for clearance of cellular formaldehyde, a cytotoxic and carcinogenic metabolite that induces DNA damage. Also acts as a S-nitroso-glutathione reductase by catalyzing the NADH-dependent reduction of S-nitrosoglutathione, thereby regulating protein S-nitrosylation. The sequence is that of Alcohol dehydrogenase class-3 from Mus musculus (Mouse).